The sequence spans 350 residues: Bifunctional nitrilase/nitrile hydratase NIT4B (350 aa).

A CN hydrolase domain is found at 30-302 (VRATVVQAST…EALISADLDL (273 aa)). Glutamate 70 functions as the Proton acceptor in the catalytic mechanism. Residue lysine 157 is part of the active site. Cysteine 191 functions as the Nucleophile in the catalytic mechanism.

Belongs to the carbon-nitrogen hydrolase superfamily. Nitrilase family. As to expression, highly expressed in leaves and cotyledons, lower expression in stems and roots.

The catalysed reaction is L-asparagine = 3-cyano-L-alanine + H2O. It catalyses the reaction 3-cyano-L-alanine + 2 H2O = L-aspartate + NH4(+). Its function is as follows. Involved in the cyanide detoxification pathway. Has nitrilase and nitrile-hydratase activity in the ratio 3.3:1, producing both asparagine and aspartic acid from beta-cyano-L-alanine (Ala(CN)). Can also use 3-phenylpropionitrile as substrate, but not indole-3-acetonitrile. This is Bifunctional nitrilase/nitrile hydratase NIT4B (NIT4B) from Lupinus angustifolius (Narrow-leaved blue lupine).